Reading from the N-terminus, the 378-residue chain is GDP-mannose 3,5-epimerase 1 (378 aa).

Residues 36–62, aspartate 60, and aspartate 80 each bind NAD(+); that span reads GAGGFIGSHIARRLKSEGHYIIASDWK. Substrate contacts are provided by residues glycine 105 and 145–147; that span reads SAC. NAD(+)-binding residues include tyrosine 175 and lysine 179. Catalysis depends on tyrosine 175, which acts as the Proton acceptor. Residues asparagine 204, 217–219, lysine 226, 242–244, arginine 307, and serine 357 contribute to the substrate site; these read EKA and QTR.

Belongs to the NAD(P)-dependent epimerase/dehydratase family. Homodimer. The cofactor is NAD(+).

It catalyses the reaction GDP-alpha-D-mannose = GDP-beta-L-gulose. The catalysed reaction is GDP-beta-L-gulose = GDP-beta-L-galactose. It functions in the pathway cofactor biosynthesis; L-ascorbate biosynthesis via GDP-alpha-D-mannose pathway; L-ascorbate from GDP-alpha-D-mannose: step 1/5. In terms of biological role, catalyzes a reversible epimerization of GDP-D-mannose that precedes the committed step in the biosynthesis of vitamin C (L-ascorbate), resulting in the hydrolysis of the highly energetic glycosyl-pyrophosphoryl linkage. Able to catalyze 2 distinct epimerization reactions and can release both GDP-L-galactose and GDP-L-gulose from GDP-mannose. The chain is GDP-mannose 3,5-epimerase 1 from Oryza sativa subsp. indica (Rice).